The following is a 291-amino-acid chain: Nucleotide-binding protein LJ_0866 (291 aa).

13 to 20 (GMSGAGKT) lines the ATP pocket. 63-66 (DLRV) lines the GTP pocket.

This sequence belongs to the RapZ-like family.

In terms of biological role, displays ATPase and GTPase activities. The polypeptide is Nucleotide-binding protein LJ_0866 (Lactobacillus johnsonii (strain CNCM I-12250 / La1 / NCC 533)).